Consider the following 299-residue polypeptide: Taste receptor type 2 member 50 (299 aa).

A topological domain (extracellular) is located at residue Met-1. A helical transmembrane segment spans residues 2 to 22; sequence ITFLYIFFSILIMVLFVLGNF. At 23–55 the chain is on the cytoplasmic side; that stretch reads ANGFIALVNFIDWVKRKKISSADQILTALAVSR. The chain crosses the membrane as a helical span at residues 56 to 76; sequence IGLLWALLLNWYLTVLNPAFY. Over 77 to 87 the chain is Extracellular; sequence SVELRITSYNA. The helical transmembrane segment at 88-108 threads the bilayer; sequence WVVTNHFSMWLAANLSIFYLL. The Cytoplasmic segment spans residues 109–126; that stretch reads KIANFSNLLFLHLKRRVR. Residues 127 to 147 traverse the membrane as a helical segment; sequence SVILVILLGTLIFLVCHLLVA. At 148 to 181 the chain is on the extracellular side; it reads NMDESMWAEEYEGNMTGKMKLRNTVHLSYLTVTT. Asn-161 carries an N-linked (GlcNAc...) asparagine glycan. A helical transmembrane segment spans residues 182–202; that stretch reads LWSFIPFTLSLISFLMLICSL. At 203–229 the chain is on the cytoplasmic side; that stretch reads CKHLKKMQLHGEGSQDLSTKVHIKALQ. Residues 230–250 form a helical membrane-spanning segment; it reads TLISFLLLCAIFFLFLIVSVW. Topologically, residues 251–259 are extracellular; sequence SPRRLRNDP. Residues 260–280 form a helical membrane-spanning segment; sequence VVMVSKAVGNIYLAFDSFILI. At 281–299 the chain is on the cytoplasmic side; it reads WRTKKLKHTFLLILCQIRC.

This sequence belongs to the G-protein coupled receptor T2R family. Expressed in subsets of taste receptor cells of the tongue and exclusively in gustducin-positive cells.

It localises to the membrane. Its function is as follows. Receptor that may play a role in the perception of bitterness and is gustducin-linked. May play a role in sensing the chemical composition of the gastrointestinal content. The activity of this receptor may stimulate alpha gustducin, mediate PLC-beta-2 activation and lead to the gating of TRPM5. This Homo sapiens (Human) protein is Taste receptor type 2 member 50 (TAS2R50).